Reading from the N-terminus, the 218-residue chain is Ribose-5-phosphate isomerase A (218 aa).

Residues 28-31 (TGST), 81-84 (DGAD), and 94-97 (KGGG) contribute to the substrate site. The active-site Proton acceptor is the Glu-103. A substrate-binding site is contributed by Lys-121.

It belongs to the ribose 5-phosphate isomerase family. As to quaternary structure, homodimer.

It catalyses the reaction aldehydo-D-ribose 5-phosphate = D-ribulose 5-phosphate. It functions in the pathway carbohydrate degradation; pentose phosphate pathway; D-ribose 5-phosphate from D-ribulose 5-phosphate (non-oxidative stage): step 1/1. In terms of biological role, catalyzes the reversible conversion of ribose-5-phosphate to ribulose 5-phosphate. The protein is Ribose-5-phosphate isomerase A of Colwellia psychrerythraea (strain 34H / ATCC BAA-681) (Vibrio psychroerythus).